A 574-amino-acid chain; its full sequence is Protein SIX6OS1 (574 aa).

A disordered region spans residues 259–313 (KDEQVSNRSSQNSQLLLPCESQKFVRNMNSSEARVTDKKEESSANQSKFVRSDVR). Positions 264–275 (SNRSSQNSQLLL) are enriched in low complexity. Thr427 is subject to Phosphothreonine. At Ser430 the chain carries Phosphoserine. Residues 549-574 (QDPSTMTSSSSKDFSSSQNKTQFMFF) are disordered. Over residues 552 to 565 (STMTSSSSKDFSSS) the composition is skewed to low complexity.

As to quaternary structure, interacts with SYCE1. Interacts with proteasome subunit PSMA8; to participate in meiosis progression during spermatogenesis. As to expression, most abundantly expressed in testis. Also expressed in retina and skeletal muscle.

It is found in the chromosome. Meiotic protein that localizes to the central element of the synaptonemal complex and is required for chromosome synapsis during meiotic recombination. Required for the appropriate processing of intermediate recombination nodules before crossover formation. The sequence is that of Protein SIX6OS1 (Six6os1) from Mus musculus (Mouse).